A 165-amino-acid chain; its full sequence is HTH-type transcriptional regulator IscR (165 aa).

The region spanning Arg2–Asn131 is the HTH rrf2-type domain. Positions Leu28 to Lys51 form a DNA-binding region, H-T-H motif. Residues Cys92, Cys98, and Cys104 each coordinate [2Fe-2S] cluster.

Requires [2Fe-2S] cluster as cofactor.

Regulates the transcription of several operons and genes involved in the biogenesis of Fe-S clusters and Fe-S-containing proteins. This chain is HTH-type transcriptional regulator IscR, found in Erwinia tasmaniensis (strain DSM 17950 / CFBP 7177 / CIP 109463 / NCPPB 4357 / Et1/99).